Reading from the N-terminus, the 285-residue chain is Protease HtpX homolog (285 aa).

The next 2 membrane-spanning stretches (helical) occupy residues 7–27 (TAML…MIGG) and 30–50 (GMTI…WFSD). Histidine 131 provides a ligand contact to Zn(2+). Residue glutamate 132 is part of the active site. Histidine 135 serves as a coordination point for Zn(2+). The next 2 helical transmembrane spans lie at 146–166 (ITAT…FFGG) and 177–197 (IAGI…QMAI). Glutamate 202 provides a ligand contact to Zn(2+).

It belongs to the peptidase M48B family. Zn(2+) serves as cofactor.

Its subcellular location is the cell inner membrane. This Burkholderia ambifaria (strain MC40-6) protein is Protease HtpX homolog.